Consider the following 158-residue polypeptide: MQGRLSAWLVKHGLIHRSLGFDYQGIETLQIKPEAWHSIAVILYVYGYNYLRSQCAYDVAPGGLLASVYHLTRIECGIDQPEEVCIKVFVQGKILGIPSIFWVWKSADFQERESYDMLGISYYNHPRLKRILMPESWIGWPLRKDYIAPNFYEIQDAH.

Belongs to the complex I 30 kDa subunit family. In terms of assembly, NDH is composed of at least 16 different subunits, 5 of which are encoded in the nucleus.

Its subcellular location is the plastid. The protein resides in the chloroplast thylakoid membrane. It carries out the reaction a plastoquinone + NADH + (n+1) H(+)(in) = a plastoquinol + NAD(+) + n H(+)(out). The enzyme catalyses a plastoquinone + NADPH + (n+1) H(+)(in) = a plastoquinol + NADP(+) + n H(+)(out). NDH shuttles electrons from NAD(P)H:plastoquinone, via FMN and iron-sulfur (Fe-S) centers, to quinones in the photosynthetic chain and possibly in a chloroplast respiratory chain. The immediate electron acceptor for the enzyme in this species is believed to be plastoquinone. Couples the redox reaction to proton translocation, and thus conserves the redox energy in a proton gradient. The chain is NAD(P)H-quinone oxidoreductase subunit J, chloroplastic from Lupinus luteus (European yellow lupine).